Reading from the N-terminus, the 234-residue chain is Large ribosomal subunit protein uL3 (234 aa).

The segment at 137 to 156 (AGHGVERKHRSPGSVGGCAT) is disordered.

Belongs to the universal ribosomal protein uL3 family. In terms of assembly, part of the 50S ribosomal subunit. Forms a cluster with proteins L14 and L19.

In terms of biological role, one of the primary rRNA binding proteins, it binds directly near the 3'-end of the 23S rRNA, where it nucleates assembly of the 50S subunit. This is Large ribosomal subunit protein uL3 from Frankia alni (strain DSM 45986 / CECT 9034 / ACN14a).